The chain runs to 344 residues: Glycerol-3-phosphate dehydrogenase [NAD(P)+] (344 aa).

NADPH contacts are provided by Ser23, Tyr24, His44, and Lys118. Residues Lys118, Gly147, and Thr149 each coordinate sn-glycerol 3-phosphate. Residue Ala151 participates in NADPH binding. Sn-glycerol 3-phosphate-binding residues include Lys203, Asp256, Ser266, Arg267, and Asn268. Lys203 (proton acceptor) is an active-site residue. Position 267 (Arg267) interacts with NADPH. The NADPH site is built by Val291 and Glu293.

This sequence belongs to the NAD-dependent glycerol-3-phosphate dehydrogenase family.

It is found in the cytoplasm. The enzyme catalyses sn-glycerol 3-phosphate + NAD(+) = dihydroxyacetone phosphate + NADH + H(+). The catalysed reaction is sn-glycerol 3-phosphate + NADP(+) = dihydroxyacetone phosphate + NADPH + H(+). The protein operates within membrane lipid metabolism; glycerophospholipid metabolism. Its function is as follows. Catalyzes the reduction of the glycolytic intermediate dihydroxyacetone phosphate (DHAP) to sn-glycerol 3-phosphate (G3P), the key precursor for phospholipid synthesis. This Vibrio cholerae serotype O1 (strain ATCC 39541 / Classical Ogawa 395 / O395) protein is Glycerol-3-phosphate dehydrogenase [NAD(P)+].